We begin with the raw amino-acid sequence, 278 residues long: S-formylglutathione hydrolase YeiG (278 aa).

Residues serine 145, aspartate 223, and histidine 256 each act as charge relay system in the active site.

Belongs to the esterase D family.

The enzyme catalyses S-formylglutathione + H2O = formate + glutathione + H(+). Serine hydrolase involved in the detoxification of formaldehyde. Hydrolyzes S-formylglutathione to glutathione and formate. The sequence is that of S-formylglutathione hydrolase YeiG (yeiG) from Shigella boydii serotype 4 (strain Sb227).